A 458-amino-acid chain; its full sequence is tRNA modification GTPase MnmE (458 aa).

Residues arginine 22, glutamate 85, and arginine 124 each coordinate (6S)-5-formyl-5,6,7,8-tetrahydrofolate. Residues 220–379 enclose the TrmE-type G domain; that stretch reads GIKTVIVGRP…LEEHISELVF (160 aa). Asparagine 230 contributes to the K(+) binding site. GTP-binding positions include 230-235, 249-255, and 274-277; these read NVGKSS, TEIPGTT, and DTAG. A Mg(2+)-binding site is contributed by serine 234. Residues threonine 249, isoleucine 251, and threonine 254 each contribute to the K(+) site. Threonine 255 lines the Mg(2+) pocket. (6S)-5-formyl-5,6,7,8-tetrahydrofolate is bound at residue lysine 458.

The protein belongs to the TRAFAC class TrmE-Era-EngA-EngB-Septin-like GTPase superfamily. TrmE GTPase family. Homodimer. Heterotetramer of two MnmE and two MnmG subunits. It depends on K(+) as a cofactor.

The protein localises to the cytoplasm. Its function is as follows. Exhibits a very high intrinsic GTPase hydrolysis rate. Involved in the addition of a carboxymethylaminomethyl (cmnm) group at the wobble position (U34) of certain tRNAs, forming tRNA-cmnm(5)s(2)U34. The sequence is that of tRNA modification GTPase MnmE from Natranaerobius thermophilus (strain ATCC BAA-1301 / DSM 18059 / JW/NM-WN-LF).